A 316-amino-acid polypeptide reads, in one-letter code: Beta-ketoacyl-[acyl-carrier-protein] synthase III (316 aa).

Active-site residues include Cys112 and His243. The segment at 244 to 248 (QANLR) is ACP-binding. Asn273 is an active-site residue.

This sequence belongs to the thiolase-like superfamily. FabH family. Homodimer.

It is found in the cytoplasm. The catalysed reaction is malonyl-[ACP] + acetyl-CoA + H(+) = 3-oxobutanoyl-[ACP] + CO2 + CoA. It functions in the pathway lipid metabolism; fatty acid biosynthesis. Functionally, catalyzes the condensation reaction of fatty acid synthesis by the addition to an acyl acceptor of two carbons from malonyl-ACP. Catalyzes the first condensation reaction which initiates fatty acid synthesis and may therefore play a role in governing the total rate of fatty acid production. Possesses both acetoacetyl-ACP synthase and acetyl transacylase activities. Its substrate specificity determines the biosynthesis of branched-chain and/or straight-chain of fatty acids. In Histophilus somni (strain 2336) (Haemophilus somnus), this protein is Beta-ketoacyl-[acyl-carrier-protein] synthase III.